The sequence spans 503 residues: UDP-N-acetylmuramate--L-alanine ligase (503 aa).

The tract at residues 1-22 (MIKQTHVSNSSNNSTNSTAAQV) is disordered. The segment covering 8–18 (SNSSNNSTNST) has biased composition (low complexity). Residue 135–141 (GTHGKTT) coordinates ATP.

The protein belongs to the MurCDEF family.

Its subcellular location is the cytoplasm. It catalyses the reaction UDP-N-acetyl-alpha-D-muramate + L-alanine + ATP = UDP-N-acetyl-alpha-D-muramoyl-L-alanine + ADP + phosphate + H(+). It participates in cell wall biogenesis; peptidoglycan biosynthesis. Functionally, cell wall formation. In Colwellia psychrerythraea (strain 34H / ATCC BAA-681) (Vibrio psychroerythus), this protein is UDP-N-acetylmuramate--L-alanine ligase.